Here is a 744-residue protein sequence, read N- to C-terminus: Receptor-like serine/threonine-protein kinase ALE2 (744 aa).

The N-terminal stretch at 1–19 is a signal peptide; sequence MRNFAMLLLLILLLHSLAS. Residues 20-260 are Extracellular-facing; sequence FPICFARLFP…SQGIGFRTIA (241 aa). The segment covering 59 to 68 has biased composition (pro residues); it reads PAFSPNPSRI. The interval 59–79 is disordered; that stretch reads PAFSPNPSRIPPLRHKGHHRH. Basic residues predominate over residues 70 to 79; it reads PLRHKGHHRH. N-linked (GlcNAc...) asparagine glycosylation is found at Asn-87, Asn-186, Asn-204, Asn-243, and Asn-249. Residues 261-281 form a helical membrane-spanning segment; it reads IIALSGFVLILVLVGAISIIV. At 282–744 the chain is on the cytoplasmic side; the sequence is KWKKIGKSSN…HLWSGNGDWL (463 aa). The 271-residue stretch at 349–619 folds into the Protein kinase domain; sequence FSAKRVLGEG…GEVVQALKLI (271 aa). Residues 355 to 363 and Lys-377 contribute to the ATP site; that span reads LGEGGFGRV. The active-site Proton acceptor is the Asp-470. Disordered regions lie at residues 681–705 and 722–744; these read EDME…PNRS and GSMS…GDWL.

It belongs to the protein kinase superfamily. Ser/Thr protein kinase family. Autophosphorylated and phosphorylated by ACR4.

It localises to the cell membrane. It carries out the reaction L-seryl-[protein] + ATP = O-phospho-L-seryl-[protein] + ADP + H(+). It catalyses the reaction L-threonyl-[protein] + ATP = O-phospho-L-threonyl-[protein] + ADP + H(+). In terms of biological role, required during the differentiation of the protoderm into shoots epidermis and cuticle. The polypeptide is Receptor-like serine/threonine-protein kinase ALE2 (ALE2) (Arabidopsis thaliana (Mouse-ear cress)).